A 427-amino-acid chain; its full sequence is 3-phosphoshikimate 1-carboxyvinyltransferase (427 aa).

Residues Lys20, Ser21, and Arg25 each contribute to the 3-phosphoshikimate site. A phosphoenolpyruvate-binding site is contributed by Lys20. The phosphoenolpyruvate site is built by Gly92 and Arg120. Positions 166, 168, 312, and 339 each coordinate 3-phosphoshikimate. Position 168 (Gln168) interacts with phosphoenolpyruvate. Asp312 acts as the Proton acceptor in catalysis. 2 residues coordinate phosphoenolpyruvate: Arg343 and Arg385.

This sequence belongs to the EPSP synthase family. As to quaternary structure, monomer.

It localises to the cytoplasm. It catalyses the reaction 3-phosphoshikimate + phosphoenolpyruvate = 5-O-(1-carboxyvinyl)-3-phosphoshikimate + phosphate. It participates in metabolic intermediate biosynthesis; chorismate biosynthesis; chorismate from D-erythrose 4-phosphate and phosphoenolpyruvate: step 6/7. Catalyzes the transfer of the enolpyruvyl moiety of phosphoenolpyruvate (PEP) to the 5-hydroxyl of shikimate-3-phosphate (S3P) to produce enolpyruvyl shikimate-3-phosphate and inorganic phosphate. This chain is 3-phosphoshikimate 1-carboxyvinyltransferase, found in Streptococcus equi subsp. equi (strain 4047).